The sequence spans 398 residues: Na(+)/H(+) antiporter NhaA (398 aa).

12 helical membrane passes run 21-41, 56-76, 94-114, 124-144, 153-173, 176-196, 201-221, 263-283, 284-304, 306-326, 333-353, and 367-387; these read AGGI…NSPL, LSVS…LVGL, VLPG…YVFI, GWAI…SLLG, VFLT…IAIF, SGLS…LVVL, VMTL…VLKS, IVPF…SLAG, LSLG…LVVG, LVGV…DLPA, MIGI…IGLL, and VGIL…LLMA.

Belongs to the NhaA Na(+)/H(+) (TC 2.A.33) antiporter family.

It localises to the cell inner membrane. The enzyme catalyses Na(+)(in) + 2 H(+)(out) = Na(+)(out) + 2 H(+)(in). Na(+)/H(+) antiporter that extrudes sodium in exchange for external protons. The chain is Na(+)/H(+) antiporter NhaA from Mesorhizobium japonicum (strain LMG 29417 / CECT 9101 / MAFF 303099) (Mesorhizobium loti (strain MAFF 303099)).